Here is a 652-residue protein sequence, read N- to C-terminus: Acetyl-coenzyme A synthetase (652 aa).

Residues 189–192 and Thr311 each bind CoA; that span reads RGDK. ATP-binding positions include 387-389, 411-416, Asp500, and Arg515; these read GEP and DTWWQT. Ser523 is a binding site for CoA. Arg526 is a binding site for ATP. Residues His539 and Val542 each contribute to the Mg(2+) site. Arg584 contributes to the CoA binding site. The residue at position 609 (Lys609) is an N6-acetyllysine.

The protein belongs to the ATP-dependent AMP-binding enzyme family. Requires Mg(2+) as cofactor. In terms of processing, acetylated. Deacetylation by the SIR2-homolog deacetylase activates the enzyme.

It catalyses the reaction acetate + ATP + CoA = acetyl-CoA + AMP + diphosphate. Functionally, catalyzes the conversion of acetate into acetyl-CoA (AcCoA), an essential intermediate at the junction of anabolic and catabolic pathways. AcsA undergoes a two-step reaction. In the first half reaction, AcsA combines acetate with ATP to form acetyl-adenylate (AcAMP) intermediate. In the second half reaction, it can then transfer the acetyl group from AcAMP to the sulfhydryl group of CoA, forming the product AcCoA. The polypeptide is Acetyl-coenzyme A synthetase (Bartonella bacilliformis (strain ATCC 35685 / KC583 / Herrer 020/F12,63)).